We begin with the raw amino-acid sequence, 184 residues long: dCTP deaminase (184 aa).

107–112 (KSTIAR) contributes to the dCTP binding site. Glu133 serves as the catalytic Proton donor/acceptor. Gln152, Tyr166, and Gln176 together coordinate dCTP.

It belongs to the dCTP deaminase family. Homotrimer.

The enzyme catalyses dCTP + H2O + H(+) = dUTP + NH4(+). Its pathway is pyrimidine metabolism; dUMP biosynthesis; dUMP from dCTP (dUTP route): step 1/2. In terms of biological role, catalyzes the deamination of dCTP to dUTP. The protein is dCTP deaminase of Roseiflexus castenholzii (strain DSM 13941 / HLO8).